Here is a 278-residue protein sequence, read N- to C-terminus: Bicarbonate transport ATP-binding protein CmpD (278 aa).

Positions 21 to 254 (LIVENVSKIY…RPRDRERIME (234 aa)) constitute an ABC transporter domain. 57–64 (GHSGCGKS) lines the ATP pocket.

The protein belongs to the ABC transporter superfamily. Nitrate/nitrite/cyanate uptake transporter (NitT) (TC 3.A.1.16) family. As to quaternary structure, the complex is composed of two ATP-binding proteins (CmpC and CmpD), a transmembrane protein (CmpB) and a solute-binding protein (CmpA).

It localises to the cell inner membrane. Part of the ABC transporter complex CmpABCD involved in bicarbonate transport. Responsible for energy coupling to the transport system. The chain is Bicarbonate transport ATP-binding protein CmpD (cmpD) from Synechococcus elongatus (strain ATCC 33912 / PCC 7942 / FACHB-805) (Anacystis nidulans R2).